The chain runs to 176 residues: Large ribosomal subunit protein uL6 (176 aa).

This sequence belongs to the universal ribosomal protein uL6 family. Part of the 50S ribosomal subunit.

In terms of biological role, this protein binds to the 23S rRNA, and is important in its secondary structure. It is located near the subunit interface in the base of the L7/L12 stalk, and near the tRNA binding site of the peptidyltransferase center. In Methanospirillum hungatei JF-1 (strain ATCC 27890 / DSM 864 / NBRC 100397 / JF-1), this protein is Large ribosomal subunit protein uL6.